A 367-amino-acid chain; its full sequence is 2-aminoethylphosphonate--pyruvate transaminase (367 aa).

At lysine 194 the chain carries N6-(pyridoxal phosphate)lysine.

This sequence belongs to the class-V pyridoxal-phosphate-dependent aminotransferase family. PhnW subfamily. Homodimer. The cofactor is pyridoxal 5'-phosphate.

It carries out the reaction (2-aminoethyl)phosphonate + pyruvate = phosphonoacetaldehyde + L-alanine. In terms of biological role, involved in phosphonate degradation. The protein is 2-aminoethylphosphonate--pyruvate transaminase of Salmonella choleraesuis (strain SC-B67).